A 431-amino-acid chain; its full sequence is Saglin (431 aa).

A signal peptide spans 1–39; it reads MSVRDYSGVQVISSRKHRSMSRLPTVLLLLASAAVLAAG. Residue Asn-95 is glycosylated (N-linked (GlcNAc...) asparagine). Positions 120-169 form a coiled coil; it reads LDDAQRQMEQEHRQYAATLEEQLHAAQQETQQEQEMKKALQKQLDALTDS.

Homodimer. As to expression, female salivary gland (at protein level). Not detected in female carcass without salivary glands, midgut and hemolymph (at protein level). Probably not expressed in male tissues.

Its subcellular location is the secreted. In terms of biological role, (Microbial infection) Facilitates efficient midgut colonization by Plasmodium berghei parasites. Promotes successful transmission of Plasmodium berghei at low infection densities. Its function is as follows. (Microbial infection) Facilitates efficient midgut colonization by Plasmodium falciparum. The protein is Saglin of Anopheles coluzzii (African malaria mosquito).